The sequence spans 602 residues: Elongation factor 4 (602 aa).

One can recognise a tr-type G domain in the interval K7 to E189. GTP is bound by residues D19–T24 and N136–D139.

Belongs to the TRAFAC class translation factor GTPase superfamily. Classic translation factor GTPase family. LepA subfamily.

Its subcellular location is the cell membrane. The enzyme catalyses GTP + H2O = GDP + phosphate + H(+). Required for accurate and efficient protein synthesis under certain stress conditions. May act as a fidelity factor of the translation reaction, by catalyzing a one-codon backward translocation of tRNAs on improperly translocated ribosomes. Back-translocation proceeds from a post-translocation (POST) complex to a pre-translocation (PRE) complex, thus giving elongation factor G a second chance to translocate the tRNAs correctly. Binds to ribosomes in a GTP-dependent manner. This chain is Elongation factor 4, found in Ruminiclostridium cellulolyticum (strain ATCC 35319 / DSM 5812 / JCM 6584 / H10) (Clostridium cellulolyticum).